The chain runs to 115 residues: Large ribosomal subunit protein bL20 (115 aa).

It belongs to the bacterial ribosomal protein bL20 family.

Functionally, binds directly to 23S ribosomal RNA and is necessary for the in vitro assembly process of the 50S ribosomal subunit. It is not involved in the protein synthesizing functions of that subunit. The chain is Large ribosomal subunit protein bL20 from Borrelia duttonii (strain Ly).